The sequence spans 268 residues: Tryptophan synthase alpha chain (268 aa).

Active-site proton acceptor residues include glutamate 49 and aspartate 60.

This sequence belongs to the TrpA family. As to quaternary structure, tetramer of two alpha and two beta chains.

It carries out the reaction (1S,2R)-1-C-(indol-3-yl)glycerol 3-phosphate + L-serine = D-glyceraldehyde 3-phosphate + L-tryptophan + H2O. It participates in amino-acid biosynthesis; L-tryptophan biosynthesis; L-tryptophan from chorismate: step 5/5. Functionally, the alpha subunit is responsible for the aldol cleavage of indoleglycerol phosphate to indole and glyceraldehyde 3-phosphate. This chain is Tryptophan synthase alpha chain, found in Escherichia coli O6:K15:H31 (strain 536 / UPEC).